Consider the following 632-residue polypeptide: Bifunctional protein GlmU (632 aa).

A pyrophosphorylase region spans residues 1–229 (MAERELSVAI…PQEIVGVNDR (229 aa)). UDP-N-acetyl-alpha-D-glucosamine contacts are provided by residues 11 to 14 (LAAG), lysine 25, glutamine 76, and 81 to 82 (GT). Aspartate 106 provides a ligand contact to Mg(2+). Residues glycine 143, glutamate 158, asparagine 173, and asparagine 227 each contribute to the UDP-N-acetyl-alpha-D-glucosamine site. Residue asparagine 227 coordinates Mg(2+). The interval 230–250 (RQLAQAYQILQDRLKEAWMEA) is linker. The segment at 251 to 632 (GVTFVDPDSS…ADNSRPKSLQ (382 aa)) is N-acetyltransferase. Residues arginine 332 and lysine 350 each contribute to the UDP-N-acetyl-alpha-D-glucosamine site. Histidine 362 acts as the Proton acceptor in catalysis. UDP-N-acetyl-alpha-D-glucosamine contacts are provided by tyrosine 365 and asparagine 376. Residues alanine 379, 385 to 386 (NY), alanine 422, and arginine 441 contribute to the acetyl-CoA site. A disordered region spans residues 600-632 (VAGDPCWPSPPPQPQQNQQTKPEADNSRPKSLQ). The segment covering 621–632 (PEADNSRPKSLQ) has biased composition (basic and acidic residues).

The protein in the N-terminal section; belongs to the N-acetylglucosamine-1-phosphate uridyltransferase family. In the C-terminal section; belongs to the transferase hexapeptide repeat family. Homotrimer. Mg(2+) serves as cofactor.

It is found in the cytoplasm. The catalysed reaction is alpha-D-glucosamine 1-phosphate + acetyl-CoA = N-acetyl-alpha-D-glucosamine 1-phosphate + CoA + H(+). It carries out the reaction N-acetyl-alpha-D-glucosamine 1-phosphate + UTP + H(+) = UDP-N-acetyl-alpha-D-glucosamine + diphosphate. The protein operates within nucleotide-sugar biosynthesis; UDP-N-acetyl-alpha-D-glucosamine biosynthesis; N-acetyl-alpha-D-glucosamine 1-phosphate from alpha-D-glucosamine 6-phosphate (route II): step 2/2. Its pathway is nucleotide-sugar biosynthesis; UDP-N-acetyl-alpha-D-glucosamine biosynthesis; UDP-N-acetyl-alpha-D-glucosamine from N-acetyl-alpha-D-glucosamine 1-phosphate: step 1/1. It participates in bacterial outer membrane biogenesis; LPS lipid A biosynthesis. Functionally, catalyzes the last two sequential reactions in the de novo biosynthetic pathway for UDP-N-acetylglucosamine (UDP-GlcNAc). The C-terminal domain catalyzes the transfer of acetyl group from acetyl coenzyme A to glucosamine-1-phosphate (GlcN-1-P) to produce N-acetylglucosamine-1-phosphate (GlcNAc-1-P), which is converted into UDP-GlcNAc by the transfer of uridine 5-monophosphate (from uridine 5-triphosphate), a reaction catalyzed by the N-terminal domain. The protein is Bifunctional protein GlmU of Synechococcus sp. (strain JA-2-3B'a(2-13)) (Cyanobacteria bacterium Yellowstone B-Prime).